The chain runs to 117 residues: Large ribosomal subunit protein bL20 (117 aa).

It belongs to the bacterial ribosomal protein bL20 family.

Functionally, binds directly to 23S ribosomal RNA and is necessary for the in vitro assembly process of the 50S ribosomal subunit. It is not involved in the protein synthesizing functions of that subunit. This is Large ribosomal subunit protein bL20 from Vibrio cholerae serotype O1 (strain ATCC 39541 / Classical Ogawa 395 / O395).